The sequence spans 487 residues: Betaine aldehyde dehydrogenase (487 aa).

K(+) contacts are provided by S26 and D93. NAD(+) is bound at residue 150-152 (GAW). Residue K162 is the Charge relay system of the active site. NAD(+) is bound by residues 176–179 (KPSE) and 229–232 (SVPT). L244 is a binding site for K(+). E250 serves as the catalytic Proton acceptor. Residues G252, C284, and E384 each coordinate NAD(+). C284 acts as the Nucleophile in catalysis. C284 is subject to Cysteine sulfenic acid (-SOH). K(+) contacts are provided by K454 and G457. E461 acts as the Charge relay system in catalysis.

The protein belongs to the aldehyde dehydrogenase family. In terms of assembly, dimer of dimers. K(+) serves as cofactor.

The enzyme catalyses betaine aldehyde + NAD(+) + H2O = glycine betaine + NADH + 2 H(+). It participates in amine and polyamine biosynthesis; betaine biosynthesis via choline pathway; betaine from betaine aldehyde: step 1/1. Functionally, involved in the biosynthesis of the osmoprotectant glycine betaine. Catalyzes the irreversible oxidation of betaine aldehyde to the corresponding acid. The protein is Betaine aldehyde dehydrogenase of Rhizobium etli (strain ATCC 51251 / DSM 11541 / JCM 21823 / NBRC 15573 / CFN 42).